An 80-amino-acid chain; its full sequence is Exodeoxyribonuclease 7 small subunit (80 aa).

This sequence belongs to the XseB family. In terms of assembly, heterooligomer composed of large and small subunits.

Its subcellular location is the cytoplasm. The catalysed reaction is Exonucleolytic cleavage in either 5'- to 3'- or 3'- to 5'-direction to yield nucleoside 5'-phosphates.. Bidirectionally degrades single-stranded DNA into large acid-insoluble oligonucleotides, which are then degraded further into small acid-soluble oligonucleotides. The polypeptide is Exodeoxyribonuclease 7 small subunit (Maridesulfovibrio salexigens (strain ATCC 14822 / DSM 2638 / NCIMB 8403 / VKM B-1763) (Desulfovibrio salexigens)).